Reading from the N-terminus, the 85-residue chain is U4-theraphotoxin-Hhn1a (85 aa).

A signal peptide spans 1–22 (MKVTLIAILTCAAVLVLHTTAA). Residues 23 to 48 (EELEAESQLMEVGMPDTELAAVDEER) constitute a propeptide that is removed on maturation. Disulfide bonds link Cys52–Cys66, Cys56–Cys77, and Cys71–Cys82.

It belongs to the neurotoxin 12 (Hwtx-2) family. 02 (Hwtx-2) subfamily. As to quaternary structure, monomer. As to expression, expressed by the venom gland.

It is found in the secreted. In terms of biological role, neurotoxin active on both insects and mammals. This chain is U4-theraphotoxin-Hhn1a, found in Cyriopagopus hainanus (Chinese bird spider).